Reading from the N-terminus, the 257-residue chain is Phosphate import ATP-binding protein PstB (257 aa).

In terms of domain architecture, ABC transporter spans 11-252; that stretch reads IQVRDLNFYY…PAKKQTEDYI (242 aa). An ATP-binding site is contributed by 43–50; the sequence is GPSGSGKS.

This sequence belongs to the ABC transporter superfamily. Phosphate importer (TC 3.A.1.7) family. The complex is composed of two ATP-binding proteins (PstB), two transmembrane proteins (PstC and PstA) and a solute-binding protein (PstS).

It is found in the cell inner membrane. It catalyses the reaction phosphate(out) + ATP + H2O = ADP + 2 phosphate(in) + H(+). Functionally, part of the ABC transporter complex PstSACB involved in phosphate import. Responsible for energy coupling to the transport system. The protein is Phosphate import ATP-binding protein PstB of Salmonella choleraesuis (strain SC-B67).